The primary structure comprises 141 residues: Hemoglobin subunit alpha-2 (141 aa).

The Globin domain maps to 1-141 (VLSEGNKKII…VTYQLSSLYR (141 aa)). H59 provides a ligand contact to O2. Heme b is bound at residue H88.

Belongs to the globin family. Heterotetramer of two alpha chains and two beta chains. Red blood cells.

In terms of biological role, involved in oxygen transport from the lung to the various peripheral tissues. This Torpedo marmorata (Marbled electric ray) protein is Hemoglobin subunit alpha-2.